Consider the following 1086-residue polypeptide: Fused isobutyryl-CoA mutase (1086 aa).

The B12-binding domain maps to 10–140 (HVRFVTASSL…QGMINVMLEE (131 aa)). An adenosylcob(III)alamin-binding site is contributed by histidine 23. Residues 153–407 (LERLPSGDVQ…FVALVDTINK (255 aa)) form a GTPase chaperone MeaI region. 210–215 (GAGKSS) contacts GTP. Mg(2+)-binding residues include serine 214, valine 238, aspartate 239, and aspartate 252. Residue arginine 255 coordinates GTP. Mg(2+) contacts are provided by glutamate 300 and threonine 301. 347-350 (NKFE) lines the GTP pocket. The segment at 408–570 (KAGTNWKTSL…YKENVPGSFP (163 aa)) is linker. Substrate-binding residues include phenylalanine 578, arginine 613, arginine 719, tyrosine 763, serine 812, arginine 847, and lysine 852. Glutamate 964 and asparagine 1085 together coordinate GTP.

This sequence belongs to the IcmF family. Homodimer. The cofactor is adenosylcob(III)alamin. It depends on Mg(2+) as a cofactor.

It catalyses the reaction 2-methylpropanoyl-CoA = butanoyl-CoA. The enzyme catalyses 3-methylbutanoyl-CoA = 2,2-dimethylpropanoyl-CoA. It carries out the reaction GTP + H2O = GDP + phosphate + H(+). In terms of biological role, catalyzes the reversible interconversion of isobutyryl-CoA and n-butyryl-CoA, and to a lesser extent, of pivalyl-CoA and isovaleryl-CoA, using radical chemistry. Also exhibits GTPase activity, associated with its G-protein domain (MeaI) that functions as a chaperone that assists cofactor delivery and proper holo-enzyme assembly. Also displays ATPase activity. Is not able to convert 3-hydroxybutyryl-CoA to 2-hydroxyisobutyryl-CoA. Does not exhibit methylmalonyl-CoA mutase (MCM) activity. In Geobacillus kaustophilus (strain HTA426), this protein is Fused isobutyryl-CoA mutase.